The chain runs to 58 residues: Large ribosomal subunit protein uL30 (58 aa).

This sequence belongs to the universal ribosomal protein uL30 family. As to quaternary structure, part of the 50S ribosomal subunit.

The polypeptide is Large ribosomal subunit protein uL30 (Bacteroides fragilis (strain ATCC 25285 / DSM 2151 / CCUG 4856 / JCM 11019 / LMG 10263 / NCTC 9343 / Onslow / VPI 2553 / EN-2)).